We begin with the raw amino-acid sequence, 840 residues long: MNGEYRGRGFGRGRFQSWKRGRGGGNFSGKWREREHRPDLSKTTGKRTSEQTPQFLLSTKTPQSMQSTLDRFIPYKGWKLYFSEVYSDSSPLIEKIQAFEKFFTRHIDLYDKDEIERKGSILVDFKELTEGGEVTNLIPDIATELRDAPEKTLACMGLAIHQVLTKDLERHAAELQAQEGLSNDGETMVNVPHIHARVYNYEPLTQLKNVRANYYGKYIALRGTVVRVSNIKPLCTKMAFLCAACGEIQSFPLPDGKYSLPTKCPVPVCRGRSFTALRSSPLTVTMDWQSIKIQELMSDDQREAGRIPRTIECELVHDLVDSCVPGDTVTITGIVKVSNAEEGSRNKNDKCMFLLYIEANSISNSKGQKTKSSEDGCKHGMLMEFSLKDLYAIQEIQAEENLFKLIVNSLCPVIFGHELVKAGLALALFGGSQKYADDKNRIPIRGDPHILVVGDPGLGKSQMLQAACNVAPRGVYVCGNTTTTSGLTVTLSKDSSSGDFALEAGALVLGDQGICGIDEFDKMGNQHQALLEAMEQQSISLAKAGVVCSLPARTSIIAAANPVGGHYNKAKTVSENLKMGSALLSRFDLVFILLDTPNEHHDHLLSEHVIAIRAGKQRTISSATVARMNSQDSNTSVLEVVSEKPLSERLKVVPGETIDPIPHQLLRKYIGYARQYVYPRLSTEAARVLQDFYLELRKQSQRLNSSPITTRQLESLIRLTEARARLELREEATKEDAEDIVEIMKYSMLGTYSDEFGNLDFERSQHGSGMSNRSTAKRFISALNNVAERTYNNIFQFHQLRQIAKELNIQVADFENFIGSLNDQGYLLKKGPKVYQLQTM.

Positions 16 to 54 are disordered; it reads QSWKRGRGGGNFSGKWREREHRPDLSKTTGKRTSEQTPQ. Basic and acidic residues predominate over residues 30 to 40; the sequence is KWREREHRPDL. An MCM domain is found at 402–609; the sequence is LFKLIVNSLC…HHDHLLSEHV (208 aa). An ATP-binding site is contributed by 454–461; that stretch reads GDPGLGKS. The residue at position 630 (S630) is a Phosphoserine.

It belongs to the MCM family. In terms of assembly, component of the MCM8-MCM9 complex, which forms a hexamer composed of MCM8 and MCM9. Interacts with the DNA mismatch repair (MMR) complex composed at least of MSH2, MSH3, MSH6, PMS1 and MLH1. Interacts with RAD51; the interaction recruits RAD51 to DNA damage sites. Interacts with the MRN complex composed of MRE11, RAD50 and NBN/NBS1. Interacts with CDC6 and ORC2. Interacts with HROB; the interaction recruits the MCM8-MCM9 complex to DNA damage sites. Highest levels in placenta, lung and pancreas. Low levels in skeletal muscle and kidney. Expressed in various tumors with highest levels in colon and lung cancers.

The protein localises to the nucleus. The protein resides in the chromosome. The enzyme catalyses ATP + H2O = ADP + phosphate + H(+). Functionally, component of the MCM8-MCM9 complex, a complex involved in the repair of double-stranded DNA breaks (DBSs) and DNA interstrand cross-links (ICLs) by homologous recombination (HR). Required for DNA resection by the MRE11-RAD50-NBN/NBS1 (MRN) complex by recruiting the MRN complex to the repair site and by promoting the complex nuclease activity. Probably by regulating the localization of the MNR complex, indirectly regulates the recruitment of downstream effector RAD51 to DNA damage sites including DBSs and ICLs. The MCM8-MCM9 complex is dispensable for DNA replication and S phase progression. However, may play a non-essential for DNA replication: may be involved in the activation of the prereplicative complex (pre-RC) during G(1) phase by recruiting CDC6 to the origin recognition complex (ORC). Probably by regulating HR, plays a key role during gametogenesis. Stabilizes MCM9 protein. The chain is DNA helicase MCM8 (MCM8) from Homo sapiens (Human).